Consider the following 407-residue polypeptide: Imidazolonepropionase (407 aa).

Residues H68 and H70 each coordinate Fe(3+). Positions 68 and 70 each coordinate Zn(2+). R77, Y140, and H173 together coordinate 4-imidazolone-5-propanoate. Y140 lines the N-formimidoyl-L-glutamate pocket. Position 238 (H238) interacts with Fe(3+). Residue H238 coordinates Zn(2+). Residue Q241 coordinates 4-imidazolone-5-propanoate. D313 is a Fe(3+) binding site. D313 contacts Zn(2+). N-formimidoyl-L-glutamate contacts are provided by N315 and G317. T318 provides a ligand contact to 4-imidazolone-5-propanoate.

This sequence belongs to the metallo-dependent hydrolases superfamily. HutI family. The cofactor is Zn(2+). Fe(3+) serves as cofactor.

The protein resides in the cytoplasm. The enzyme catalyses 4-imidazolone-5-propanoate + H2O = N-formimidoyl-L-glutamate. It participates in amino-acid degradation; L-histidine degradation into L-glutamate; N-formimidoyl-L-glutamate from L-histidine: step 3/3. Catalyzes the hydrolytic cleavage of the carbon-nitrogen bond in imidazolone-5-propanoate to yield N-formimidoyl-L-glutamate. It is the third step in the universal histidine degradation pathway. In Burkholderia lata (strain ATCC 17760 / DSM 23089 / LMG 22485 / NCIMB 9086 / R18194 / 383), this protein is Imidazolonepropionase.